The chain runs to 306 residues: Homoserine kinase (306 aa).

ATP is bound at residue 90-100 (PLARGLGSSAS).

This sequence belongs to the GHMP kinase family. Homoserine kinase subfamily.

It localises to the cytoplasm. It catalyses the reaction L-homoserine + ATP = O-phospho-L-homoserine + ADP + H(+). It functions in the pathway amino-acid biosynthesis; L-threonine biosynthesis; L-threonine from L-aspartate: step 4/5. Its function is as follows. Catalyzes the ATP-dependent phosphorylation of L-homoserine to L-homoserine phosphate. This chain is Homoserine kinase, found in Staphylococcus epidermidis (strain ATCC 12228 / FDA PCI 1200).